We begin with the raw amino-acid sequence, 330 residues long: Succinylglutamate desuccinylase (330 aa).

3 residues coordinate Zn(2+): His53, Glu56, and His147. Glu210 is an active-site residue.

The protein belongs to the AspA/AstE family. Succinylglutamate desuccinylase subfamily. The cofactor is Zn(2+).

It catalyses the reaction N-succinyl-L-glutamate + H2O = L-glutamate + succinate. It participates in amino-acid degradation; L-arginine degradation via AST pathway; L-glutamate and succinate from L-arginine: step 5/5. Functionally, transforms N(2)-succinylglutamate into succinate and glutamate. The protein is Succinylglutamate desuccinylase of Yersinia pseudotuberculosis serotype O:1b (strain IP 31758).